The chain runs to 161 residues: ATP synthase subunit b (161 aa).

Residues 1-21 (MYLNATILGQVIAFILFVWFC) form a helical membrane-spanning segment.

Belongs to the ATPase B chain family. As to quaternary structure, F-type ATPases have 2 components, F(1) - the catalytic core - and F(0) - the membrane proton channel. F(1) has five subunits: alpha(3), beta(3), gamma(1), delta(1), epsilon(1). F(0) has three main subunits: a(1), b(2) and c(10-14). The alpha and beta chains form an alternating ring which encloses part of the gamma chain. F(1) is attached to F(0) by a central stalk formed by the gamma and epsilon chains, while a peripheral stalk is formed by the delta and b chains.

The protein localises to the cell inner membrane. Functionally, f(1)F(0) ATP synthase produces ATP from ADP in the presence of a proton or sodium gradient. F-type ATPases consist of two structural domains, F(1) containing the extramembraneous catalytic core and F(0) containing the membrane proton channel, linked together by a central stalk and a peripheral stalk. During catalysis, ATP synthesis in the catalytic domain of F(1) is coupled via a rotary mechanism of the central stalk subunits to proton translocation. Its function is as follows. Component of the F(0) channel, it forms part of the peripheral stalk, linking F(1) to F(0). The sequence is that of ATP synthase subunit b from Blochmanniella floridana.